Consider the following 407-residue polypeptide: Arginine deiminase (407 aa).

The active-site Amidino-cysteine intermediate is Cys-397.

It belongs to the arginine deiminase family.

It localises to the cytoplasm. It carries out the reaction L-arginine + H2O = L-citrulline + NH4(+). It functions in the pathway amino-acid degradation; L-arginine degradation via ADI pathway; carbamoyl phosphate from L-arginine: step 1/2. This chain is Arginine deiminase (arcA), found in Escherichia coli O6:H1 (strain CFT073 / ATCC 700928 / UPEC).